Consider the following 38-residue polypeptide: Photosystem II reaction center protein L (38 aa).

A helical membrane pass occupies residues 17-37 (SLYWGLLLIFVLAVLFSNYFF).

The protein belongs to the PsbL family. As to quaternary structure, PSII is composed of 1 copy each of membrane proteins PsbA, PsbB, PsbC, PsbD, PsbE, PsbF, PsbH, PsbI, PsbJ, PsbK, PsbL, PsbM, PsbT, PsbX, PsbY, PsbZ, Psb30/Ycf12, at least 3 peripheral proteins of the oxygen-evolving complex and a large number of cofactors. It forms dimeric complexes.

The protein resides in the plastid. Its subcellular location is the chloroplast thylakoid membrane. One of the components of the core complex of photosystem II (PSII). PSII is a light-driven water:plastoquinone oxidoreductase that uses light energy to abstract electrons from H(2)O, generating O(2) and a proton gradient subsequently used for ATP formation. It consists of a core antenna complex that captures photons, and an electron transfer chain that converts photonic excitation into a charge separation. This subunit is found at the monomer-monomer interface and is required for correct PSII assembly and/or dimerization. The protein is Photosystem II reaction center protein L of Gnetum gnemon (Spanish joint-fir).